The following is a 366-amino-acid chain: Pyruvate dehydrogenase E1 component subunit beta, mitochondrial (366 aa).

A mitochondrion-targeting transit peptide spans 1 to 33 (MFSRLPTSLARNVARRAPTSFVRPSAAAAALRF). E95 contacts thiamine diphosphate. 4 residues coordinate K(+): A196, I197, D199, and N201.

As to quaternary structure, pyruvate dehydrogenase (E1) is a tetramer of 2 alpha and 2 beta subunits. Eukaryotic pyruvate dehydrogenase (PDH) complexes are organized as a core consisting of the oligomeric dihydrolipoamide acetyl-transferase (E2), around which are arranged multiple copies of pyruvate dehydrogenase (E1), dihydrolipoamide dehydrogenase (E3) and protein X (E3BP) bound by non-covalent bonds. The cofactor is thiamine diphosphate.

It is found in the mitochondrion matrix. It carries out the reaction N(6)-[(R)-lipoyl]-L-lysyl-[protein] + pyruvate + H(+) = N(6)-[(R)-S(8)-acetyldihydrolipoyl]-L-lysyl-[protein] + CO2. The pyruvate dehydrogenase complex catalyzes the overall conversion of pyruvate to acetyl-CoA and CO(2). The protein is Pyruvate dehydrogenase E1 component subunit beta, mitochondrial (PDB1) of Saccharomyces cerevisiae (strain ATCC 204508 / S288c) (Baker's yeast).